The following is a 1199-amino-acid chain: Putative mitoferrin (1199 aa).

Residues 32–52 form a helical membrane-spanning segment; the sequence is VPLWQHIFCGSIAGLMEHVFM. 13 N-linked (GlcNAc...) asparagine glycosylation sites follow: asparagine 92, asparagine 171, asparagine 208, asparagine 268, asparagine 326, asparagine 353, asparagine 443, asparagine 499, asparagine 539, asparagine 649, asparagine 708, asparagine 715, and asparagine 723. A helical membrane pass occupies residues 730–750; the sequence is GVNVVVLGCIPAHALYFSTFE. Asparagine 763 and asparagine 772 each carry an N-linked (GlcNAc...) asparagine glycan. The stretch at 792–873 is one Solcar 1 repeat; the sequence is LNYFSIAVSG…ICTNEKMKKI (82 aa). 2 helical membrane-spanning segments follow: residues 795–815 and 845–865; these read FSIAVSGFLATLVHDLIITPI and LYLSLPITLLMNIPYQIIMIC. Residues asparagine 914, asparagine 922, asparagine 965, asparagine 1013, asparagine 1022, asparagine 1041, and asparagine 1056 are each glycosylated (N-linked (GlcNAc...) asparagine). Residues 1109–1191 form a Solcar 2 repeat; that stretch reads SYFVCAGIGG…WGTYETMKRF (83 aa). Residues 1111-1131 traverse the membrane as a helical segment; it reads FVCAGIGGGIAAVLTNPLDVI.

The protein belongs to the mitochondrial carrier (TC 2.A.29) family.

It is found in the mitochondrion membrane. In terms of biological role, putative iron transporter. This Plasmodium falciparum (isolate 3D7) protein is Putative mitoferrin.